A 209-amino-acid chain; its full sequence is Large ribosomal subunit protein uL3 (209 aa).

Residues 113 to 155 (TSRGHGYQGNIKRHHQSRGPETHGSRYHRIPGSMGSIINRVPK) are disordered.

The protein belongs to the universal ribosomal protein uL3 family. In terms of assembly, part of the 50S ribosomal subunit. Forms a cluster with proteins L14 and L19.

One of the primary rRNA binding proteins, it binds directly near the 3'-end of the 23S rRNA, where it nucleates assembly of the 50S subunit. This Lactobacillus delbrueckii subsp. bulgaricus (strain ATCC 11842 / DSM 20081 / BCRC 10696 / JCM 1002 / NBRC 13953 / NCIMB 11778 / NCTC 12712 / WDCM 00102 / Lb 14) protein is Large ribosomal subunit protein uL3.